A 124-amino-acid chain; its full sequence is Large ribosomal subunit protein uL29 (124 aa).

Belongs to the universal ribosomal protein uL29 family.

The polypeptide is Large ribosomal subunit protein uL29 (RPL35) (Triticum aestivum (Wheat)).